Reading from the N-terminus, the 136-residue chain is Small ribosomal subunit protein uS8 (136 aa).

This sequence belongs to the universal ribosomal protein uS8 family. In terms of assembly, part of the 30S ribosomal subunit. Contacts proteins S5 and S12.

One of the primary rRNA binding proteins, it binds directly to 16S rRNA central domain where it helps coordinate assembly of the platform of the 30S subunit. This is Small ribosomal subunit protein uS8 from Persephonella marina (strain DSM 14350 / EX-H1).